A 473-amino-acid chain; its full sequence is Bifunctional protein GlmU (473 aa).

Residues 1–226 (MRAPVAVVIL…AGEASGINDL (226 aa)) are pyrophosphorylase. Residues 10 to 13 (LAAG), lysine 24, glutamine 75, 80 to 81 (GT), 102 to 104 (YGD), glycine 136, glutamate 151, asparagine 166, and asparagine 224 each bind UDP-N-acetyl-alpha-D-glucosamine. Aspartate 104 lines the Mg(2+) pocket. A Mg(2+)-binding site is contributed by asparagine 224. The interval 227 to 247 (VQLAEVEEAFQRRWARRLLQG) is linker. An N-acetyltransferase region spans residues 248–473 (GLRLVAPHRF…TPASGGAKEE (226 aa)). UDP-N-acetyl-alpha-D-glucosamine is bound by residues arginine 330 and lysine 348. Residue histidine 360 is the Proton acceptor of the active site. 2 residues coordinate UDP-N-acetyl-alpha-D-glucosamine: tyrosine 363 and asparagine 374. Residues alanine 377, 383 to 384 (NY), serine 402, alanine 420, and arginine 437 contribute to the acetyl-CoA site. A disordered region spans residues 439–473 (RARTIPGWQHPGLTGRRGPPDDNDATPASGGAKEE).

This sequence in the N-terminal section; belongs to the N-acetylglucosamine-1-phosphate uridyltransferase family. The protein in the C-terminal section; belongs to the transferase hexapeptide repeat family. Homotrimer. Mg(2+) serves as cofactor.

It is found in the cytoplasm. The enzyme catalyses alpha-D-glucosamine 1-phosphate + acetyl-CoA = N-acetyl-alpha-D-glucosamine 1-phosphate + CoA + H(+). It carries out the reaction N-acetyl-alpha-D-glucosamine 1-phosphate + UTP + H(+) = UDP-N-acetyl-alpha-D-glucosamine + diphosphate. It functions in the pathway nucleotide-sugar biosynthesis; UDP-N-acetyl-alpha-D-glucosamine biosynthesis; N-acetyl-alpha-D-glucosamine 1-phosphate from alpha-D-glucosamine 6-phosphate (route II): step 2/2. It participates in nucleotide-sugar biosynthesis; UDP-N-acetyl-alpha-D-glucosamine biosynthesis; UDP-N-acetyl-alpha-D-glucosamine from N-acetyl-alpha-D-glucosamine 1-phosphate: step 1/1. Its pathway is bacterial outer membrane biogenesis; LPS lipid A biosynthesis. Its function is as follows. Catalyzes the last two sequential reactions in the de novo biosynthetic pathway for UDP-N-acetylglucosamine (UDP-GlcNAc). The C-terminal domain catalyzes the transfer of acetyl group from acetyl coenzyme A to glucosamine-1-phosphate (GlcN-1-P) to produce N-acetylglucosamine-1-phosphate (GlcNAc-1-P), which is converted into UDP-GlcNAc by the transfer of uridine 5-monophosphate (from uridine 5-triphosphate), a reaction catalyzed by the N-terminal domain. This is Bifunctional protein GlmU from Halorhodospira halophila (strain DSM 244 / SL1) (Ectothiorhodospira halophila (strain DSM 244 / SL1)).